The sequence spans 160 residues: Protein-export protein SecB (160 aa).

The protein belongs to the SecB family. As to quaternary structure, homotetramer, a dimer of dimers. One homotetramer interacts with 1 SecA dimer.

It is found in the cytoplasm. One of the proteins required for the normal export of preproteins out of the cell cytoplasm. It is a molecular chaperone that binds to a subset of precursor proteins, maintaining them in a translocation-competent state. It also specifically binds to its receptor SecA. The protein is Protein-export protein SecB of Aliivibrio salmonicida (strain LFI1238) (Vibrio salmonicida (strain LFI1238)).